Consider the following 202-residue polypeptide: Holliday junction branch migration complex subunit RuvA (202 aa).

A domain I region spans residues 1–63; it reads MIASLRGTVL…EDSMTLYGFT (63 aa). A domain II region spans residues 64–142; that stretch reads SQDDRDMFHV…AFAPAESADL (79 aa). The interval 143–148 is flexible linker; that stretch reads SSAAPA. The segment at 149-202 is domain III; the sequence is AAGPVVEDVVEALIGLGFTDKMARPVVESVVAEQPDAATPVVLRAALSQLGAKK.

It belongs to the RuvA family. In terms of assembly, homotetramer. Forms an RuvA(8)-RuvB(12)-Holliday junction (HJ) complex. HJ DNA is sandwiched between 2 RuvA tetramers; dsDNA enters through RuvA and exits via RuvB. An RuvB hexamer assembles on each DNA strand where it exits the tetramer. Each RuvB hexamer is contacted by two RuvA subunits (via domain III) on 2 adjacent RuvB subunits; this complex drives branch migration. In the full resolvosome a probable DNA-RuvA(4)-RuvB(12)-RuvC(2) complex forms which resolves the HJ.

The protein localises to the cytoplasm. Functionally, the RuvA-RuvB-RuvC complex processes Holliday junction (HJ) DNA during genetic recombination and DNA repair, while the RuvA-RuvB complex plays an important role in the rescue of blocked DNA replication forks via replication fork reversal (RFR). RuvA specifically binds to HJ cruciform DNA, conferring on it an open structure. The RuvB hexamer acts as an ATP-dependent pump, pulling dsDNA into and through the RuvAB complex. HJ branch migration allows RuvC to scan DNA until it finds its consensus sequence, where it cleaves and resolves the cruciform DNA. This is Holliday junction branch migration complex subunit RuvA from Corynebacterium aurimucosum (strain ATCC 700975 / DSM 44827 / CIP 107346 / CN-1) (Corynebacterium nigricans).